The following is a 159-amino-acid chain: RNA pyrophosphohydrolase (159 aa).

The 144-residue stretch at 6–149 (GFRPNVGIIL…KREVYRRALK (144 aa)) folds into the Nudix hydrolase domain. The Nudix box signature appears at 38 to 59 (GGINDRESPEEALYRELNEEVG).

Belongs to the Nudix hydrolase family. RppH subfamily. The cofactor is a divalent metal cation.

In terms of biological role, accelerates the degradation of transcripts by removing pyrophosphate from the 5'-end of triphosphorylated RNA, leading to a more labile monophosphorylated state that can stimulate subsequent ribonuclease cleavage. This chain is RNA pyrophosphohydrolase, found in Ectopseudomonas mendocina (strain ymp) (Pseudomonas mendocina).